Consider the following 131-residue polypeptide: Leptin receptor overlapping transcript-like 1 (131 aa).

The next 4 membrane-spanning stretches (helical) occupy residues 7 to 27 (LISL…GCAL), 32 to 52 (QYWP…YCIA), 69 to 89 (LAIF…VVFA), and 100 to 120 (ALVL…FLVF).

This sequence belongs to the OB-RGRP/VPS55 family. In terms of assembly, interacts with RAB13.

It localises to the membrane. Functionally, negatively regulates growth hormone (GH) receptor cell surface expression in liver. May play a role in liver resistance to GH during periods of reduced nutrient availability. In Mus musculus (Mouse), this protein is Leptin receptor overlapping transcript-like 1 (Leprotl1).